We begin with the raw amino-acid sequence, 668 residues long: Methionine--tRNA ligase (668 aa).

The 'HIGH' region signature appears at 11-21 (AYTNGPLHIGH). Residues Cys146, Cys149, Cys159, and Cys162 each contribute to the Zn(2+) site. Residues 332 to 336 (KMSTS) carry the 'KMSKS' region motif. Thr335 is an ATP binding site. The tRNA-binding domain maps to 567-668 (EFNRLDLRVG…REVEPGERIR (102 aa)).

It belongs to the class-I aminoacyl-tRNA synthetase family. MetG type 1 subfamily. Homodimer. Zn(2+) serves as cofactor.

The protein resides in the cytoplasm. The catalysed reaction is tRNA(Met) + L-methionine + ATP = L-methionyl-tRNA(Met) + AMP + diphosphate. Functionally, is required not only for elongation of protein synthesis but also for the initiation of all mRNA translation through initiator tRNA(fMet) aminoacylation. In Methanopyrus kandleri (strain AV19 / DSM 6324 / JCM 9639 / NBRC 100938), this protein is Methionine--tRNA ligase.